Consider the following 450-residue polypeptide: Phosphoglucosamine mutase (450 aa).

The active-site Phosphoserine intermediate is S101. Mg(2+)-binding residues include S101, D240, D242, and D244. S101 bears the Phosphoserine mark.

Belongs to the phosphohexose mutase family. It depends on Mg(2+) as a cofactor. Activated by phosphorylation.

The catalysed reaction is alpha-D-glucosamine 1-phosphate = D-glucosamine 6-phosphate. Functionally, catalyzes the conversion of glucosamine-6-phosphate to glucosamine-1-phosphate. This Streptococcus pneumoniae (strain Hungary19A-6) protein is Phosphoglucosamine mutase.